The following is a 23-amino-acid chain: Phallacidin proprotein (23 aa).

Proline 1 is a propeptide. The segment at residues 2–8 (AWLVDCP) is a cross-link (cyclopeptide (Ala-Pro)). The 2'-cysteinyl-6'-hydroxytryptophan sulfoxide (Trp-Cys) cross-link spans 3 to 7 (WLVDC). A propeptide spanning residues 9–23 (CVGDDVNRLLARGEK) is cleaved from the precursor.

Belongs to the MSDIN fungal toxin family. In terms of processing, processed by the macrocyclase-peptidase enzyme POPB to yield a toxic cyclic heptapeptide. POPB first removes 10 residues from the N-terminus. Conformational trapping of the remaining peptide forces the enzyme to release this intermediate rather than proceed to macrocyclization. The enzyme rebinds the remaining peptide in a different conformation and catalyzes macrocyclization of the N-terminal 7 residues.

Functionally, major toxin that belongs to the bicyclic heptapeptides called phallotoxins. Although structurally related to amatoxins, phallotoxins have a different mode of action, which is the stabilization of F-actin. Phallotoxins are poisonous when administered parenterally, but not orally because of poor absorption. The protein is Phallacidin proprotein of Amanita fuliginea (East Asian brown death cap).